The sequence spans 245 residues: Methyltransferase-like protein 27 (245 aa).

The protein is Methyltransferase-like protein 27 of Homo sapiens (Human).